A 132-amino-acid chain; its full sequence is ATP synthase epsilon chain (132 aa).

It belongs to the ATPase epsilon chain family. In terms of assembly, F-type ATPases have 2 components, CF(1) - the catalytic core - and CF(0) - the membrane proton channel. CF(1) has five subunits: alpha(3), beta(3), gamma(1), delta(1), epsilon(1). CF(0) has three main subunits: a, b and c.

It localises to the cell membrane. Its function is as follows. Produces ATP from ADP in the presence of a proton gradient across the membrane. This is ATP synthase epsilon chain from Desulfitobacterium hafniense (strain DSM 10664 / DCB-2).